Consider the following 758-residue polypeptide: 5-methyltetrahydropteroyltriglutamate--homocysteine methyltransferase (758 aa).

5-methyltetrahydropteroyltri-L-glutamate is bound by residues 17–20 and K110; that span reads RELK. L-homocysteine-binding positions include 428–430 and E481; that span reads IGS. Residues 428 to 430 and E481 contribute to the L-methionine site; that span reads IGS. 5-methyltetrahydropteroyltri-L-glutamate-binding positions include 512–513 and W558; that span reads RC. Position 596 (D596) interacts with L-homocysteine. L-methionine is bound at residue D596. E602 is a 5-methyltetrahydropteroyltri-L-glutamate binding site. Zn(2+)-binding residues include H638, C640, and E662. H691 functions as the Proton donor in the catalytic mechanism. C723 is a Zn(2+) binding site.

It belongs to the vitamin-B12 independent methionine synthase family. It depends on Zn(2+) as a cofactor.

It carries out the reaction 5-methyltetrahydropteroyltri-L-glutamate + L-homocysteine = tetrahydropteroyltri-L-glutamate + L-methionine. Its pathway is amino-acid biosynthesis; L-methionine biosynthesis via de novo pathway; L-methionine from L-homocysteine (MetE route): step 1/1. Its function is as follows. Catalyzes the transfer of a methyl group from 5-methyltetrahydrofolate to homocysteine resulting in methionine formation. This is 5-methyltetrahydropteroyltriglutamate--homocysteine methyltransferase from Thermosynechococcus vestitus (strain NIES-2133 / IAM M-273 / BP-1).